A 467-amino-acid chain; its full sequence is Inactive pancreatic lipase-related protein 1 (467 aa).

The first 17 residues, 1–17 (MLIFWTITLFLLGAAKG), serve as a signal peptide directing secretion. Disulfide bonds link cysteine 21-cysteine 27 and cysteine 109-cysteine 120. Serine 171 acts as the Nucleophile in catalysis. Aspartate 194 (charge relay system) is an active-site residue. Residues glutamate 205, arginine 208, aspartate 210, and aspartate 213 each contribute to the Ca(2+) site. An intrachain disulfide couples cysteine 255 to cysteine 279. The active-site Charge relay system is histidine 281. Intrachain disulfides connect cysteine 303-cysteine 314, cysteine 317-cysteine 322, and cysteine 451-cysteine 467. The PLAT domain occupies 356–467 (WRYGVSITLS…EDTLLTLTPC (112 aa)).

Belongs to the AB hydrolase superfamily. Lipase family. In terms of tissue distribution, pancreas.

The protein resides in the secreted. In terms of biological role, may function as inhibitor of dietary triglyceride digestion. Lacks detectable lipase activity towards triglycerides, diglycerides, phosphatidylcholine, galactolipids or cholesterol esters (in vitro). The chain is Inactive pancreatic lipase-related protein 1 (PNLIPRP1) from Homo sapiens (Human).